We begin with the raw amino-acid sequence, 208 residues long: 3,4-dihydroxy-2-butanone 4-phosphate synthase (208 aa).

Residue threonine 3 is modified to Phosphothreonine. Mg(2+) is bound at residue glutamate 27. Position 31 (aspartate 31) interacts with D-ribulose 5-phosphate. Cysteine 56 carries the S-glutathionyl cysteine; by GRX2 modification. Residues threonine 88 and 145-149 (RRGHT) contribute to the D-ribulose 5-phosphate site. Histidine 148 contributes to the Mg(2+) binding site.

The protein belongs to the DHBP synthase family. Homodimer. Requires Mg(2+) as cofactor. It depends on Mn(2+) as a cofactor. S-glutathionylation of Cys-56 is reversible and dependent on the cytoplasmic isoform of glutaredoxin-2.

It is found in the cytoplasm. The protein resides in the nucleus. Its subcellular location is the mitochondrion intermembrane space. It carries out the reaction D-ribulose 5-phosphate = (2S)-2-hydroxy-3-oxobutyl phosphate + formate + H(+). Its pathway is cofactor biosynthesis; riboflavin biosynthesis; 2-hydroxy-3-oxobutyl phosphate from D-ribulose 5-phosphate: step 1/1. Catalyzes the conversion of D-ribulose 5-phosphate to formate and 3,4-dihydroxy-2-butanone 4-phosphate. Also has an unrelated function in expression of mitochondrial respiration. In Saccharomyces cerevisiae (strain ATCC 204508 / S288c) (Baker's yeast), this protein is 3,4-dihydroxy-2-butanone 4-phosphate synthase (RIB3).